We begin with the raw amino-acid sequence, 609 residues long: MKWVESIFLIFLLNFTESRTLHRNEYGIASILDSYQCTAEISLADLATIFFAQFVQEATYKEVSKMVKDALTAIEKPTGDEQSSGCLENQLPAFLEELCHEKEILEKYGHSDCCSQSEEGRHNCFLAHKKPTPASIPLFQVPEPVTSCEAYEEDRETFMNKFIYEIARRHPFLYAPTILLWAARYDKIIPSCCKAENAVECFQTKAATVTKELRESSLLNQHACAVMKNFGTRTFQAITVTKLSQKFTKVNFTEIQKLVLDVAHVHEHCCRGDVLDCLQDGEKIMSYICSQQDTLSNKITECCKLTTLERGQCIIHAENDEKPEGLSPNLNRFLGDRDFNQFSSGEKNIFLASFVHEYSRRHPQLAVSVILRVAKGYQELLEKCFQTENPLECQDKGEEELQKYIQESQALAKRSCGLFQKLGEYYLQNAFLVAYTKKAPQLTSSELMAITRKMAATAATCCQLSEDKLLACGEGAADIIIGHLCIRHEMTPVNPGVGQCCTSSYANRRPCFSSLVVDETYVPPAFSDDKFIFHKDLCQAQGVALQTMKQEFLINLVKQKPQITEEQLEAVIADFSGLLEKCCQGQEQEVCFAEEGQKLISKTRAALGV.

A signal peptide spans 1-18 (MKWVESIFLIFLLNFTES). 3 consecutive Albumin domains span residues 19 to 210 (RTLH…ATVT), 211 to 402 (KELR…EELQ), and 403 to 601 (KYIQ…KLIS). A Cu(2+)-binding site is contributed by His22. 8 cysteine pairs are disulfide-bonded: Cys99/Cys114, Cys113/Cys124, Cys148/Cys193, Cys192/Cys201, Cys224/Cys270, Cys269/Cys277, Cys289/Cys303, and Cys302/Cys313. A phosphoserine; by FAM20C mark is found at Ser111, Ser115, and Ser117. An N-linked (GlcNAc...) asparagine glycan is attached at Asn251. Phosphoserine; by FAM20C is present on Ser344. 7 disulfides stabilise this stretch: Cys384-Cys393, Cys416-Cys462, Cys461-Cys472, Cys485-Cys501, Cys500-Cys511, Cys538-Cys583, and Cys582-Cys591. Phosphoserine; by FAM20C is present on residues Ser444 and Ser445.

This sequence belongs to the ALB/AFP/VDB family. Dimeric and trimeric forms have been found in addition to the monomeric form. Independent studies suggest heterogeneity of the N-terminal sequence of the mature protein and of the cleavage site of the signal sequence. In terms of processing, sulfated. In terms of tissue distribution, plasma. Synthesized by the fetal liver and yolk sac.

It localises to the secreted. In terms of biological role, binds copper, nickel, and fatty acids as well as, and bilirubin less well than, serum albumin. Only a small percentage (less than 2%) of the human AFP shows estrogen-binding properties. The sequence is that of Alpha-fetoprotein (AFP) from Homo sapiens (Human).